Here is a 212-residue protein sequence, read N- to C-terminus: Floral homeotic protein PMADS 2 (212 aa).

An MADS-box domain is found at 3-58 (RGKIEIKRIENSSNRQVTYSKRRNGIIKKAKEITVLCDAKVSLIIFGNSGKMHEYC). The region spanning 84-170 (HENLSNEIDR…QYALHQKEMA (87 aa)) is the K-box domain.

As to expression, predominantly expressed in petals and stamens, less in carpels and sepals.

The protein resides in the nucleus. In terms of biological role, transcription factor involved in the genetic control of flower development. This chain is Floral homeotic protein PMADS 2 (PMADS2), found in Petunia hybrida (Petunia).